We begin with the raw amino-acid sequence, 525 residues long: GMP synthase [glutamine-hydrolyzing] (525 aa).

In terms of domain architecture, Glutamine amidotransferase type-1 spans 9–207; it reads RILILDFGSQ…ILDICGCEAL (199 aa). The active-site Nucleophile is the C86. Residues H181 and E183 contribute to the active site. The GMPS ATP-PPase domain occupies 208–400; the sequence is WTPSKIAEDA…LGLPYDMVYR (193 aa). An ATP-binding site is contributed by 235–241; sequence SGGVDSS.

As to quaternary structure, homodimer.

The enzyme catalyses XMP + L-glutamine + ATP + H2O = GMP + L-glutamate + AMP + diphosphate + 2 H(+). It functions in the pathway purine metabolism; GMP biosynthesis; GMP from XMP (L-Gln route): step 1/1. Catalyzes the synthesis of GMP from XMP. This Pseudomonas fluorescens (strain ATCC BAA-477 / NRRL B-23932 / Pf-5) protein is GMP synthase [glutamine-hydrolyzing].